A 344-amino-acid polypeptide reads, in one-letter code: Dihydroorotase (344 aa).

Zn(2+) is bound by residues H13 and H15. Residues 15-17 and N41 contribute to the substrate site; that span reads HLR. Zn(2+)-binding residues include K99, H136, and H174. K99 carries the post-translational modification N6-carboxylysine. H136 lines the substrate pocket. Substrate is bound at residue L219. D247 serves as a coordination point for Zn(2+). Residue D247 is part of the active site. Substrate contacts are provided by H251 and A263.

Belongs to the metallo-dependent hydrolases superfamily. DHOase family. Class II DHOase subfamily. Homodimer. Zn(2+) is required as a cofactor.

The catalysed reaction is (S)-dihydroorotate + H2O = N-carbamoyl-L-aspartate + H(+). The protein operates within pyrimidine metabolism; UMP biosynthesis via de novo pathway; (S)-dihydroorotate from bicarbonate: step 3/3. Catalyzes the reversible cyclization of carbamoyl aspartate to dihydroorotate. This is Dihydroorotase from Acinetobacter baumannii (strain SDF).